A 307-amino-acid polypeptide reads, in one-letter code: Methionyl-tRNA formyltransferase (307 aa).

108-111 contributes to the (6S)-5,6,7,8-tetrahydrofolate binding site; it reads SLLP.

The protein belongs to the Fmt family.

It carries out the reaction L-methionyl-tRNA(fMet) + (6R)-10-formyltetrahydrofolate = N-formyl-L-methionyl-tRNA(fMet) + (6S)-5,6,7,8-tetrahydrofolate + H(+). Attaches a formyl group to the free amino group of methionyl-tRNA(fMet). The formyl group appears to play a dual role in the initiator identity of N-formylmethionyl-tRNA by promoting its recognition by IF2 and preventing the misappropriation of this tRNA by the elongation apparatus. The polypeptide is Methionyl-tRNA formyltransferase (Xylella fastidiosa (strain M23)).